We begin with the raw amino-acid sequence, 304 residues long: Quorum-quenching protein AidA (304 aa).

This sequence belongs to the AB hydrolase superfamily.

In terms of biological role, involved in quorum quenching (QQ). Inhibits motility and biofilm formation. Could contribute in bacterial competition, as it is capable of hydrolyzing the signaling molecules that mediate interspecies communication. This Acinetobacter baumannii (strain MDR-ZJ06) protein is Quorum-quenching protein AidA.